We begin with the raw amino-acid sequence, 391 residues long: Succinate--CoA ligase [ADP-forming] subunit beta (391 aa).

Residues 9-245 (KQIFAEYGVP…LSEEDPDEVE (237 aa)) form the ATP-grasp domain. Residues Lys-46, 53-55 (GRG), Glu-99, Ala-102, and Glu-107 contribute to the ATP site. Mg(2+)-binding residues include Asn-200 and Asp-214. Residues Asn-265 and 322–324 (GIV) contribute to the substrate site.

It belongs to the succinate/malate CoA ligase beta subunit family. In terms of assembly, heterotetramer of two alpha and two beta subunits. Mg(2+) is required as a cofactor.

The catalysed reaction is succinate + ATP + CoA = succinyl-CoA + ADP + phosphate. It carries out the reaction GTP + succinate + CoA = succinyl-CoA + GDP + phosphate. It participates in carbohydrate metabolism; tricarboxylic acid cycle; succinate from succinyl-CoA (ligase route): step 1/1. In terms of biological role, succinyl-CoA synthetase functions in the citric acid cycle (TCA), coupling the hydrolysis of succinyl-CoA to the synthesis of either ATP or GTP and thus represents the only step of substrate-level phosphorylation in the TCA. The beta subunit provides nucleotide specificity of the enzyme and binds the substrate succinate, while the binding sites for coenzyme A and phosphate are found in the alpha subunit. In Sulfurovum sp. (strain NBC37-1), this protein is Succinate--CoA ligase [ADP-forming] subunit beta.